The primary structure comprises 132 residues: Large ribosomal subunit protein uL14 (132 aa).

Belongs to the universal ribosomal protein uL14 family. In terms of assembly, part of the 50S ribosomal subunit. Forms a cluster with proteins L3 and L24e, part of which may contact the 16S rRNA in 2 intersubunit bridges.

In terms of biological role, binds to 23S rRNA. Forms part of two intersubunit bridges in the 70S ribosome. The protein is Large ribosomal subunit protein uL14 of Methanosphaera stadtmanae (strain ATCC 43021 / DSM 3091 / JCM 11832 / MCB-3).